A 113-amino-acid chain; its full sequence is Hemerythrin (113 aa).

Fe cation contacts are provided by His25, His54, Glu58, His73, His77, His101, and Asp106.

This sequence belongs to the hemerythrin family. In terms of assembly, homooctamer.

In terms of biological role, hemerythrin is a respiratory protein in blood cells of certain marine worms. The oxygen-binding site in each chain contains two iron atoms. The chain is Hemerythrin from Themiste dyscrita (Peanut worm).